We begin with the raw amino-acid sequence, 463 residues long: Exodeoxyribonuclease 7 large subunit (463 aa).

Belongs to the XseA family. As to quaternary structure, heterooligomer composed of large and small subunits.

Its subcellular location is the cytoplasm. It carries out the reaction Exonucleolytic cleavage in either 5'- to 3'- or 3'- to 5'-direction to yield nucleoside 5'-phosphates.. Its function is as follows. Bidirectionally degrades single-stranded DNA into large acid-insoluble oligonucleotides, which are then degraded further into small acid-soluble oligonucleotides. This Pseudomonas syringae pv. syringae (strain B728a) protein is Exodeoxyribonuclease 7 large subunit.